Consider the following 590-residue polypeptide: Phosphatidylserine decarboxylase proenzyme 1, mitochondrial (590 aa).

A mitochondrion-targeting transit peptide spans 1 to 59 (MPLKPISFRWSKTSVRSVPNPFMYGPDNLNKPLSRASQMAERVHQQTPSSTNYQQRRYF). The Mitochondrial matrix segment spans residues 60–140 (SYYYYQFPKI…GKERRRFIRW (81 aa)). A helical membrane pass occupies residues 141–159 (WTVTSLTIVLGGVYAKIKY). Over 160 to 590 (ERGDHEENPY…KVGQSLGGFV (431 aa)) the chain is Mitochondrial intermembrane. Residues aspartate 260, histidine 403, and serine 558 each act as charge relay system; for autoendoproteolytic cleavage activity in the active site. Serine 558 (schiff-base intermediate with substrate; via pyruvic acid; for decarboxylase activity) is an active-site residue. A Pyruvic acid (Ser); by autocatalysis modification is found at serine 558.

It belongs to the phosphatidylserine decarboxylase family. PSD-B subfamily. Eukaryotic type I sub-subfamily. As to quaternary structure, heterodimer of a large membrane-associated beta subunit and a small pyruvoyl-containing alpha subunit. Pyruvate serves as cofactor. Is synthesized initially as an inactive proenzyme. Formation of the active enzyme involves a self-maturation process in which the active site pyruvoyl group is generated from an internal serine residue via an autocatalytic post-translational modification. Two non-identical subunits are generated from the proenzyme in this reaction, and the pyruvate is formed at the N-terminus of the alpha chain, which is derived from the carboxyl end of the proenzyme. The autoendoproteolytic cleavage occurs by a canonical serine protease mechanism, in which the side chain hydroxyl group of the serine supplies its oxygen atom to form the C-terminus of the beta chain, while the remainder of the serine residue undergoes an oxidative deamination to produce ammonia and the pyruvoyl prosthetic group on the alpha chain. During this reaction, the Ser that is part of the protease active site of the proenzyme becomes the pyruvoyl prosthetic group, which constitutes an essential element of the active site of the mature decarboxylase.

The protein localises to the mitochondrion inner membrane. The catalysed reaction is a 1,2-diacyl-sn-glycero-3-phospho-L-serine + H(+) = a 1,2-diacyl-sn-glycero-3-phosphoethanolamine + CO2. Its pathway is phospholipid metabolism; phosphatidylethanolamine biosynthesis; phosphatidylethanolamine from CDP-diacylglycerol: step 2/2. Functionally, catalyzes the formation of phosphatidylethanolamine (PtdEtn) from phosphatidylserine (PtdSer). Plays a central role in phospholipid metabolism and in the interorganelle trafficking of phosphatidylserine. Important for virulence. In Candida albicans (strain SC5314 / ATCC MYA-2876) (Yeast), this protein is Phosphatidylserine decarboxylase proenzyme 1, mitochondrial.